The chain runs to 384 residues: Aurora kinase (384 aa).

2 stretches are compositionally biased toward polar residues: residues 1–12 and 19–29; these read MSYPNNKENSNN and SVPSKQPQRVL. The disordered stretch occupies residues 1–100; the sequence is MSYPNNKENS…SSSSSSSQSV (100 aa). The segment covering 30–99 has biased composition (low complexity); it reads QQQNTNINNH…SSSSSSSSQS (70 aa). Residues 110–360 enclose the Protein kinase domain; sequence FDIGKLLGMG…LKDVINHPWI (251 aa). ATP is bound by residues 116–124 and Lys-139; that span reads LGMGRFGHV. Asp-233 acts as the Proton acceptor in catalysis.

This sequence belongs to the protein kinase superfamily. Ser/Thr protein kinase family. Aurora subfamily. As to quaternary structure, interacts with icpA. Forms a complex at the central spindle.

The protein resides in the cytoplasm. The protein localises to the chromosome. It localises to the centromere. It is found in the cytoskeleton. Its subcellular location is the spindle pole. The protein resides in the cleavage furrow. The protein localises to the cell projection. It localises to the neuron projection. It carries out the reaction L-seryl-[protein] + ATP = O-phospho-L-seryl-[protein] + ADP + H(+). It catalyses the reaction L-threonyl-[protein] + ATP = O-phospho-L-threonyl-[protein] + ADP + H(+). In terms of biological role, part of a chromosomal passenger complex. The polypeptide is Aurora kinase (aurK) (Dictyostelium discoideum (Social amoeba)).